Reading from the N-terminus, the 776-residue chain is Zinc finger CCCH-type antiviral protein 1 (776 aa).

Ala2 is modified (N-acetylalanine). The interval Ala2–Leu254 is N-terminal domain. Positions Arg69–Lys76 match the Nuclear localization signal motif. C3H1-type zinc fingers lie at residues Cys73–His86, Cys88–His110, Cys150–His172, and Glu169–Leu193. Residues Asn221 to Ser249 form a disordered region. Positions Ala224–Leu254 are binding to EXOSC5. A phosphoserine; by GSK3-beta mark is found at Ser257, Ser262, Ser266, and Ser270. The residue at position 274 (Ser274) is a Phosphoserine. Phosphothreonine is present on Thr278. Residue Ser283 is modified to Phosphoserine. The Nuclear export signal motif lies at Leu284–Val291. The interval Pro308–Val355 is disordered. A compositionally biased stretch (polar residues) spans Gly318–Glu327. A phosphoserine mark is found at Ser325, Ser351, and Ser398. The span at Asp344 to Ala353 shows a compositional bias: low complexity. Residues Lys405–Lys406 carry the Nuclear localization signal motif. The disordered stretch occupies residues Trp457–Ser483. Over residues Ser459–Ser483 the composition is skewed to polar residues. The residue at position 501 (Tyr501) is a Phosphotyrosine. Positions Leu512–Arg562 are disordered. Residues Gln523 to Gly546 show a composition bias toward low complexity. A phosphoserine mark is found at Ser544 and Ser667. One can recognise a WWE domain in the interval Tyr671 to Arg758.

This sequence belongs to the ARTD/PARP family. In terms of assembly, homodimer or homooligomer. Homooligomerization is essential for its antiviral activity. Interacts with EXOSC5. Interacts with EXOSC3, EXOSC7, DCP2 and DCP1A. Interacts with PARN in an RNA-independent manner. Interacts with XRN1 in an RNA-dependent manner. Interacts (via N-terminal domain) with DHX30 (via N-terminus) in an RNA-independent manner. Interacts (via N-terminal domain) with DDX17 in an RNA-independent manner. Phosphorylation at Ser-274 is essential for sequential phosphorylation of Ser-270, Ser-266, Ser-262 and Ser-257 by GSK3-beta. Phosphorylation by GSK3-beta enhances its antiviral activity. Expressed in the kidney and liver.

It localises to the cytoplasm. The protein localises to the nucleus. Functionally, antiviral protein which inhibits the replication of viruses by recruiting the cellular RNA degradation machineries to degrade the viral mRNAs. Binds to a ZAP-responsive element (ZRE) present in the target viral mRNA, recruits cellular poly(A)-specific ribonuclease PARN to remove the poly(A) tail, and the 3'-5' exoribonuclease complex exosome to degrade the RNA body from the 3'-end. It also recruits the decapping complex DCP1-DCP2 through RNA helicase p72 (DDX17) to remove the cap structure of the viral mRNA to initiate its degradation from the 5'-end. Its target viruses belong to families which include retroviridae: human immunodeficiency virus type 1 (HIV-1) and moloney and murine leukemia virus (MoMLV), filoviridae: ebola virus (EBOV) and marburg virus (MARV), togaviridae: sindbis virus (SINV) and Ross river virus (RRV). Specifically targets the multiply spliced but not unspliced or singly spliced HIV-1 mRNAs for degradation. The sequence is that of Zinc finger CCCH-type antiviral protein 1 (Zc3hav1) from Rattus norvegicus (Rat).